Reading from the N-terminus, the 529-residue chain is Peptide chain release factor 3 (529 aa).

Residues 11-280 enclose the tr-type G domain; the sequence is NKRRTFAIIS…GLTKWAPTPL (270 aa). GTP-binding positions include 20–27, 88–92, and 142–145; these read SHPDAGKT, DTPGH, and NKCD.

The protein belongs to the TRAFAC class translation factor GTPase superfamily. Classic translation factor GTPase family. PrfC subfamily.

It localises to the cytoplasm. In terms of biological role, increases the formation of ribosomal termination complexes and stimulates activities of RF-1 and RF-2. It binds guanine nucleotides and has strong preference for UGA stop codons. It may interact directly with the ribosome. The stimulation of RF-1 and RF-2 is significantly reduced by GTP and GDP, but not by GMP. This chain is Peptide chain release factor 3, found in Pseudoalteromonas translucida (strain TAC 125).